A 588-amino-acid polypeptide reads, in one-letter code: Sulfite reductase [NADPH] hemoprotein beta-component (588 aa).

Cysteine 442, cysteine 448, cysteine 487, and cysteine 491 together coordinate [4Fe-4S] cluster. Cysteine 491 is a siroheme binding site.

It belongs to the nitrite and sulfite reductase 4Fe-4S domain family. In terms of assembly, alpha(8)-beta(8). The alpha component is a flavoprotein, the beta component is a hemoprotein. Requires siroheme as cofactor. The cofactor is [4Fe-4S] cluster.

The catalysed reaction is hydrogen sulfide + 3 NADP(+) + 3 H2O = sulfite + 3 NADPH + 4 H(+). It participates in sulfur metabolism; hydrogen sulfide biosynthesis; hydrogen sulfide from sulfite (NADPH route): step 1/1. Its function is as follows. Component of the sulfite reductase complex that catalyzes the 6-electron reduction of sulfite to sulfide. This is one of several activities required for the biosynthesis of L-cysteine from sulfate. The polypeptide is Sulfite reductase [NADPH] hemoprotein beta-component (Actinobacillus pleuropneumoniae serotype 3 (strain JL03)).